A 262-amino-acid chain; its full sequence is Glucosamine-6-phosphate deaminase (262 aa).

The active-site Proton acceptor; for enolization step is aspartate 63. The active-site For ring-opening step is asparagine 129. The active-site Proton acceptor; for ring-opening step is the histidine 131. Residue glutamate 136 is the For ring-opening step of the active site.

This sequence belongs to the glucosamine/galactosamine-6-phosphate isomerase family. NagB subfamily.

It carries out the reaction alpha-D-glucosamine 6-phosphate + H2O = beta-D-fructose 6-phosphate + NH4(+). Its pathway is amino-sugar metabolism; N-acetylneuraminate degradation; D-fructose 6-phosphate from N-acetylneuraminate: step 5/5. Catalyzes the reversible isomerization-deamination of glucosamine 6-phosphate (GlcN6P) to form fructose 6-phosphate (Fru6P) and ammonium ion. This is Glucosamine-6-phosphate deaminase from Bacillus cereus (strain B4264).